Consider the following 78-residue polypeptide: Acyl carrier protein 1 (78 aa).

Residues 2-77 enclose the Carrier domain; that stretch reads STIEERVKKI…EAIDYIVAHQ (76 aa). O-(pantetheine 4'-phosphoryl)serine is present on serine 37.

It belongs to the acyl carrier protein (ACP) family. 4'-phosphopantetheine is transferred from CoA to a specific serine of apo-ACP by AcpS. This modification is essential for activity because fatty acids are bound in thioester linkage to the sulfhydryl of the prosthetic group.

Its subcellular location is the cytoplasm. It participates in lipid metabolism; fatty acid biosynthesis. In terms of biological role, carrier of the growing fatty acid chain in fatty acid biosynthesis. The protein is Acyl carrier protein 1 of Pseudomonas aeruginosa (strain ATCC 15692 / DSM 22644 / CIP 104116 / JCM 14847 / LMG 12228 / 1C / PRS 101 / PAO1).